The following is a 116-amino-acid chain: Large ribosomal subunit protein uL18 (116 aa).

This sequence belongs to the universal ribosomal protein uL18 family. Part of the 50S ribosomal subunit; part of the 5S rRNA/L5/L18/L25 subcomplex. Contacts the 5S and 23S rRNAs.

In terms of biological role, this is one of the proteins that bind and probably mediate the attachment of the 5S RNA into the large ribosomal subunit, where it forms part of the central protuberance. The polypeptide is Large ribosomal subunit protein uL18 (Mycoplasma capricolum subsp. capricolum (strain California kid / ATCC 27343 / NCTC 10154)).